We begin with the raw amino-acid sequence, 307 residues long: Mitogen-activated protein kinase kinase 7 (307 aa).

Residues 45–303 (VEKLHVLGRG…ASQLLGHPFL (259 aa)) enclose the Protein kinase domain. Residues 51–59 (LGRGSSGIV) and Lys74 each bind ATP. The active-site Proton acceptor is the Asp165. Ser193 and Ser199 each carry phosphoserine. Residue Thr203 is modified to Phosphothreonine.

This sequence belongs to the protein kinase superfamily. STE Ser/Thr protein kinase family. MAP kinase kinase subfamily. Interacts with MPK15. Phosphorylation at Ser-193 and Ser-199 by MAP kinase kinase kinases positively regulates kinase activity. As to expression, expressed in all tissues, with a relatively higher level in leaves and lower level in roots and flowers.

The catalysed reaction is L-seryl-[protein] + ATP = O-phospho-L-seryl-[protein] + ADP + H(+). It carries out the reaction L-threonyl-[protein] + ATP = O-phospho-L-threonyl-[protein] + ADP + H(+). The enzyme catalyses L-tyrosyl-[protein] + ATP = O-phospho-L-tyrosyl-[protein] + ADP + H(+). May function as a negative regulator of polar auxin transport. Positively regulates plant basal and systemic acquired resistance (SAR). Activates MPK3 and MPK6 in vitro. This chain is Mitogen-activated protein kinase kinase 7 (MKK7), found in Arabidopsis thaliana (Mouse-ear cress).